The following is a 160-amino-acid chain: Lipoprotein signal peptidase (160 aa).

Helical transmembrane passes span 7 to 27 (VIYYLLAAAVIALDQWTKWLV), 61 to 81 (GQFWLFYLVTVIVVAGIIIYI), and 91 to 111 (AGIGLGLMLGGAIGNFIDRVF). Active-site residues include Asp117 and Asp135. A helical membrane pass occupies residues 133-153 (IADSALTVGVILLFIHMFFFA).

This sequence belongs to the peptidase A8 family.

The protein localises to the cell membrane. It carries out the reaction Release of signal peptides from bacterial membrane prolipoproteins. Hydrolyzes -Xaa-Yaa-Zaa-|-(S,diacylglyceryl)Cys-, in which Xaa is hydrophobic (preferably Leu), and Yaa (Ala or Ser) and Zaa (Gly or Ala) have small, neutral side chains.. It functions in the pathway protein modification; lipoprotein biosynthesis (signal peptide cleavage). Its function is as follows. This protein specifically catalyzes the removal of signal peptides from prolipoproteins. The protein is Lipoprotein signal peptidase of Geobacillus thermodenitrificans (strain NG80-2).